The chain runs to 42 residues: Mating-type M-specific polypeptide Mi (42 aa).

The protein resides in the cytoplasm. The protein localises to the nucleus. In terms of biological role, mating type proteins are sequence specific DNA-binding proteins that act as master switches in yeast differentiation by controlling gene expression in a cell type-specific fashion. Required for meiosis, but plays no role in conjugation. The sequence is that of Mating-type M-specific polypeptide Mi (mat1-Mi) from Schizosaccharomyces pombe (strain 972 / ATCC 24843) (Fission yeast).